The primary structure comprises 157 residues: Ribosome maturation factor RimP (157 aa).

This sequence belongs to the RimP family.

The protein resides in the cytoplasm. Its function is as follows. Required for maturation of 30S ribosomal subunits. This Enterococcus faecalis (strain ATCC 700802 / V583) protein is Ribosome maturation factor RimP.